The primary structure comprises 142 residues: Hemoglobin subunit theta-1 (142 aa).

Residues 2-142 (ALAAADRATV…VISALASDCR (141 aa)) form the Globin domain. 2 residues coordinate heme b: His59 and His88.

Belongs to the globin family.

This chain is Hemoglobin subunit theta-1 (HBQ1), found in Equus caballus (Horse).